A 136-amino-acid chain; its full sequence is Large ribosomal subunit protein uL16 (136 aa).

Belongs to the universal ribosomal protein uL16 family. Part of the 50S ribosomal subunit.

Functionally, binds 23S rRNA and is also seen to make contacts with the A and possibly P site tRNAs. This is Large ribosomal subunit protein uL16 from Aggregatibacter actinomycetemcomitans (Actinobacillus actinomycetemcomitans).